Reading from the N-terminus, the 340-residue chain is 4-hydroxy-3-methylbut-2-enyl diphosphate reductase (340 aa).

Position 13 (C13) interacts with [4Fe-4S] cluster. (2E)-4-hydroxy-3-methylbut-2-enyl diphosphate is bound by residues H42 and H75. Positions 42 and 75 each coordinate dimethylallyl diphosphate. 2 residues coordinate isopentenyl diphosphate: H42 and H75. A [4Fe-4S] cluster-binding site is contributed by C97. H125 contributes to the (2E)-4-hydroxy-3-methylbut-2-enyl diphosphate binding site. H125 is a binding site for dimethylallyl diphosphate. H125 is a binding site for isopentenyl diphosphate. The active-site Proton donor is the E127. T165 is a (2E)-4-hydroxy-3-methylbut-2-enyl diphosphate binding site. Residue C195 coordinates [4Fe-4S] cluster. Positions 223, 224, 225, and 267 each coordinate (2E)-4-hydroxy-3-methylbut-2-enyl diphosphate. Dimethylallyl diphosphate contacts are provided by S223, S224, N225, and S267. Isopentenyl diphosphate-binding residues include S223, S224, N225, and S267. A disordered region spans residues 317–340; it reads NNLDNKTAASEEADSLSNDTEQEA. A compositionally biased stretch (polar residues) spans 331-340; the sequence is SLSNDTEQEA.

The protein belongs to the IspH family. [4Fe-4S] cluster is required as a cofactor.

It catalyses the reaction isopentenyl diphosphate + 2 oxidized [2Fe-2S]-[ferredoxin] + H2O = (2E)-4-hydroxy-3-methylbut-2-enyl diphosphate + 2 reduced [2Fe-2S]-[ferredoxin] + 2 H(+). The catalysed reaction is dimethylallyl diphosphate + 2 oxidized [2Fe-2S]-[ferredoxin] + H2O = (2E)-4-hydroxy-3-methylbut-2-enyl diphosphate + 2 reduced [2Fe-2S]-[ferredoxin] + 2 H(+). It participates in isoprenoid biosynthesis; dimethylallyl diphosphate biosynthesis; dimethylallyl diphosphate from (2E)-4-hydroxy-3-methylbutenyl diphosphate: step 1/1. The protein operates within isoprenoid biosynthesis; isopentenyl diphosphate biosynthesis via DXP pathway; isopentenyl diphosphate from 1-deoxy-D-xylulose 5-phosphate: step 6/6. In terms of biological role, catalyzes the conversion of 1-hydroxy-2-methyl-2-(E)-butenyl 4-diphosphate (HMBPP) into a mixture of isopentenyl diphosphate (IPP) and dimethylallyl diphosphate (DMAPP). Acts in the terminal step of the DOXP/MEP pathway for isoprenoid precursor biosynthesis. The polypeptide is 4-hydroxy-3-methylbut-2-enyl diphosphate reductase (Zymomonas mobilis subsp. mobilis (strain ATCC 31821 / ZM4 / CP4)).